Here is a 171-residue protein sequence, read N- to C-terminus: Nicotinamide-nucleotide adenylyltransferase (171 aa).

The protein belongs to the archaeal NMN adenylyltransferase family.

Its subcellular location is the cytoplasm. The catalysed reaction is beta-nicotinamide D-ribonucleotide + ATP + H(+) = diphosphate + NAD(+). The protein operates within cofactor biosynthesis; NAD(+) biosynthesis; NAD(+) from nicotinamide D-ribonucleotide: step 1/1. The sequence is that of Nicotinamide-nucleotide adenylyltransferase from Methanococcus maripaludis (strain DSM 14266 / JCM 13030 / NBRC 101832 / S2 / LL).